Here is a 1231-residue protein sequence, read N- to C-terminus: ATP-dependent RNA helicase DHX30 (1231 aa).

The tract at residues 39-65 is disordered; sequence PDGLEGARQEDEEEQPPPPGAEEQSTA. DRBM domains lie at 80-148 and 292-359; these read PKNL…CQLF and PKNL…CQKL. The 169-residue stretch at 488–656 folds into the Helicase ATP-binding domain; the sequence is LSAIEQNPVV…FGGCPVVKVP (169 aa). 501–508 lines the ATP pocket; sequence GDTGCGKT. Positions 603-606 match the DEAH box motif; sequence DEVH. Positions 697 to 870 constitute a Helicase C-terminal domain; the sequence is LITDLVLQID…NLVVQAKIHM (174 aa).

The protein belongs to the DEAD box helicase family. DEAH subfamily.

It is found in the cytoplasm. Its subcellular location is the mitochondrion. The protein resides in the mitochondrion matrix. The protein localises to the mitochondrion nucleoid. The enzyme catalyses ATP + H2O = ADP + phosphate + H(+). Its function is as follows. RNA-dependent helicase. Plays an important role in the assembly of the mitochondrial large ribosomal subunit. Required for optimal function of the zinc-finger antiviral protein ZC3HAV1. Associates with mitochondrial DNA. Involved in nervous system development and differentiation through its involvement in the up-regulation of a number of genes which are required for neurogenesis, including GSC, NCAM1, neurogenin, and NEUROD. The protein is ATP-dependent RNA helicase DHX30 (DHX30) of Gallus gallus (Chicken).